Here is a 117-residue protein sequence, read N- to C-terminus: UPF0231 protein HI_1724 (117 aa).

This sequence belongs to the UPF0231 family.

The polypeptide is UPF0231 protein HI_1724 (Haemophilus influenzae (strain ATCC 51907 / DSM 11121 / KW20 / Rd)).